The chain runs to 431 residues: Serine/threonine-protein kinase SSN3 (431 aa).

Residues 27 to 355 (YQIIGYIAAG…ADNALVHPYF (329 aa)) enclose the Protein kinase domain. ATP contacts are provided by residues 33–41 (IAAGTYGKV) and lysine 59. Aspartate 174 functions as the Proton acceptor in the catalytic mechanism. The disordered stretch occupies residues 397-431 (RHGGAYDDQHNNSNNNTNNSLNANNANNVPRKRAR). Positions 407-424 (NNSNNNTNNSLNANNANN) are enriched in low complexity.

Belongs to the protein kinase superfamily. CMGC Ser/Thr protein kinase family. CDC2/CDKX subfamily. In terms of assembly, component of the srb8-11 complex, a regulatory module of the Mediator complex. Requires Mg(2+) as cofactor.

It is found in the nucleus. The enzyme catalyses L-seryl-[protein] + ATP = O-phospho-L-seryl-[protein] + ADP + H(+). It catalyses the reaction L-threonyl-[protein] + ATP = O-phospho-L-threonyl-[protein] + ADP + H(+). The catalysed reaction is [DNA-directed RNA polymerase] + ATP = phospho-[DNA-directed RNA polymerase] + ADP + H(+). Functionally, component of the srb8-11 complex. The srb8-11 complex is a regulatory module of the Mediator complex which is itself dependent transcription. The srb8-11 complex may be involved in the transcriptional repression of a subset of genes regulated by Mediator. It may inhibit the association of the Mediator complex with RNA polymerase II to form the holoenzyme complex. The srb8-11 complex phosphorylates the C-terminal domain (CTD) of the largest subunit of RNA polymerase II. In Scheffersomyces stipitis (strain ATCC 58785 / CBS 6054 / NBRC 10063 / NRRL Y-11545) (Yeast), this protein is Serine/threonine-protein kinase SSN3 (SSN3).